The sequence spans 462 residues: Succinate semialdehyde dehydrogenase [NAD(P)+] Sad (462 aa).

Residues 136-137, 160-163, and 212-213 each bind NADP(+); these read WN, KHAP, and GS. Residue E234 is the Proton acceptor of the active site. L235 provides a ligand contact to NADP(+). The Nucleophile role is filled by C268. E365 contacts NADP(+).

The protein belongs to the aldehyde dehydrogenase family. In terms of assembly, homodimer.

The enzyme catalyses succinate semialdehyde + NAD(+) + H2O = succinate + NADH + 2 H(+). The catalysed reaction is succinate semialdehyde + NADP(+) + H2O = succinate + NADPH + 2 H(+). It participates in amino-acid degradation; 4-aminobutanoate degradation. In terms of biological role, catalyzes the NAD(+)-dependent oxidation of succinate semialdehyde to succinate. It acts preferentially with NAD as cosubstrate but can also use NADP. Prevents the toxic accumulation of succinate semialdehyde (SSA) and plays an important role when arginine and putrescine are used as the sole nitrogen or carbon sources. The sequence is that of Succinate semialdehyde dehydrogenase [NAD(P)+] Sad (sad) from Escherichia coli (strain K12).